The following is a 252-amino-acid chain: Transmembrane ascorbate-dependent reductase CYB561 (252 aa).

Methionine 1 carries the post-translational modification N-acetylmethionine. Over 1 to 17 (MEGPASPAPAPGALPYY) the chain is Cytoplasmic. Residues 18–38 (VAFSQLLGLTVVAMTGAWLGM) traverse the membrane as a helical segment. The region spanning 20-221 (FSQLLGLTVV…FATVVLYILT (202 aa)) is the Cytochrome b561 domain. Residues 39–52 (YRGGIAWESALQFN) lie on the Vesicular side of the membrane. A helical membrane pass occupies residues 53 to 73 (VHPLCMVIGLVFLQGDALLVY). Heme b contacts are provided by histidine 54, arginine 74, and lysine 81. Residues 74–86 (RVFRNEAKRTTKV) lie on the Cytoplasmic side of the membrane. Residues lysine 81 and lysine 85 each contribute to the L-ascorbate site. A helical membrane pass occupies residues 87–107 (LHGLLHVFAFVIALVGLVAVF). Residues histidine 88, 117 to 120 (DLYS), and histidine 122 contribute to the heme b site. Residues 108–125 (EHHRKKGYADLYSLHSWC) are Vesicular-facing. The chain crosses the membrane as a helical span at residues 126-146 (GILVFALFFAQWLVGFSFFLF). Topologically, residues 147-159 (PGASFSLRSRYRP) are cytoplasmic. Arginine 154 contributes to the L-ascorbate binding site. The chain crosses the membrane as a helical span at residues 160–180 (QHVFFGAAIFLLSVATALLGL). Heme b is bound by residues histidine 161 and glutamate 182. Residues 181 to 199 (KEALLFELGTKYSTFEPEG) are Vesicular-facing. The chain crosses the membrane as a helical span at residues 200–220 (VLANVLGLLLAAFATVVLYIL). Over 221–252 (TRADWKRPLQAEEQALSMDFKTLTEGDSPSSQ) the chain is Cytoplasmic. Residue lysine 226 participates in heme b binding. Phosphoserine occurs at positions 248 and 250.

Heme b serves as cofactor.

The protein localises to the cytoplasmic vesicle. It localises to the secretory vesicle. The protein resides in the chromaffin granule membrane. It catalyses the reaction monodehydro-L-ascorbate radical(out) + L-ascorbate(in) = monodehydro-L-ascorbate radical(in) + L-ascorbate(out). Functionally, transmembrane reductase that uses ascorbate as an electron donor in the cytoplasm and transfers electrons across membranes to reduce monodehydro-L-ascorbate radical in the lumen of secretory vesicles. It is therefore involved the regeneration and homeostasis within secretory vesicles of ascorbate which in turn provides reducing equivalents needed to support the activity of intravesicular enzymes. This is Transmembrane ascorbate-dependent reductase CYB561 (CYB561) from Ovis aries (Sheep).